The primary structure comprises 160 residues: SsrA-binding protein (160 aa).

The tract at residues 132 to 160 (KEFDKRDTMRERDSNRELQRAVRNKGKEE) is disordered.

Belongs to the SmpB family.

Its subcellular location is the cytoplasm. Functionally, required for rescue of stalled ribosomes mediated by trans-translation. Binds to transfer-messenger RNA (tmRNA), required for stable association of tmRNA with ribosomes. tmRNA and SmpB together mimic tRNA shape, replacing the anticodon stem-loop with SmpB. tmRNA is encoded by the ssrA gene; the 2 termini fold to resemble tRNA(Ala) and it encodes a 'tag peptide', a short internal open reading frame. During trans-translation Ala-aminoacylated tmRNA acts like a tRNA, entering the A-site of stalled ribosomes, displacing the stalled mRNA. The ribosome then switches to translate the ORF on the tmRNA; the nascent peptide is terminated with the 'tag peptide' encoded by the tmRNA and targeted for degradation. The ribosome is freed to recommence translation, which seems to be the essential function of trans-translation. This Pseudomonas putida (strain ATCC 47054 / DSM 6125 / CFBP 8728 / NCIMB 11950 / KT2440) protein is SsrA-binding protein.